A 165-amino-acid chain; its full sequence is 3-isopropylmalate dehydratase small subunit (165 aa).

It belongs to the LeuD family. LeuD type 2 subfamily. As to quaternary structure, heterodimer of LeuC and LeuD.

The enzyme catalyses (2R,3S)-3-isopropylmalate = (2S)-2-isopropylmalate. Its pathway is amino-acid biosynthesis; L-leucine biosynthesis; L-leucine from 3-methyl-2-oxobutanoate: step 2/4. Catalyzes the isomerization between 2-isopropylmalate and 3-isopropylmalate, via the formation of 2-isopropylmaleate. This chain is 3-isopropylmalate dehydratase small subunit, found in Helicobacter hepaticus (strain ATCC 51449 / 3B1).